Here is a 101-residue protein sequence, read N- to C-terminus: MITLGHLLGLGAVLFCISLAGIFLNRKNVIVLLMSIELMLLSVNVNFIAFSRELGDTAGQLFVFFILTVAAAEAAIGLAILVTLFRTRRTINVAEVDTLKG.

3 helical membrane passes run 4 to 24, 30 to 50, and 62 to 82; these read LGHLLGLGAVLFCISLAGIFL, IVLLMSIELMLLSVNVNFIAF, and FVFFILTVAAAEAAIGLAILV.

Belongs to the complex I subunit 4L family. NDH-1 is composed of 14 different subunits. Subunits NuoA, H, J, K, L, M, N constitute the membrane sector of the complex.

It is found in the cell inner membrane. It carries out the reaction a quinone + NADH + 5 H(+)(in) = a quinol + NAD(+) + 4 H(+)(out). Its function is as follows. NDH-1 shuttles electrons from NADH, via FMN and iron-sulfur (Fe-S) centers, to quinones in the respiratory chain. The immediate electron acceptor for the enzyme in this species is believed to be ubiquinone. Couples the redox reaction to proton translocation (for every two electrons transferred, four hydrogen ions are translocated across the cytoplasmic membrane), and thus conserves the redox energy in a proton gradient. In Xanthomonas axonopodis pv. citri (strain 306), this protein is NADH-quinone oxidoreductase subunit K.